The sequence spans 130 residues: Small ribosomal subunit protein uS8 (130 aa).

This sequence belongs to the universal ribosomal protein uS8 family. As to quaternary structure, part of the 30S ribosomal subunit.

One of the primary rRNA binding proteins, it binds directly to 16S rRNA central domain where it helps coordinate assembly of the platform of the 30S subunit. The chain is Small ribosomal subunit protein uS8 from Thermococcus kodakarensis (strain ATCC BAA-918 / JCM 12380 / KOD1) (Pyrococcus kodakaraensis (strain KOD1)).